The chain runs to 240 residues: Tetrahydromethanopterin S-methyltransferase subunit A (240 aa).

The Cytoplasmic segment spans residues M1–K218. Residue H85 participates in 5-hydroxybenzimidazolylcob(I)amide binding. A helical membrane pass occupies residues F219–G239. Position 240 (R240) is a topological domain, extracellular.

This sequence belongs to the MtrA family. The complex is composed of 8 subunits; MtrA, MtrB, MtrC, MtrD, MtrE, MtrF, MtrG and MtrH. 5-hydroxybenzimidazolylcob(I)amide serves as cofactor.

It is found in the cell membrane. The catalysed reaction is 5-methyl-5,6,7,8-tetrahydromethanopterin + coenzyme M + 2 Na(+)(in) = 5,6,7,8-tetrahydromethanopterin + methyl-coenzyme M + 2 Na(+)(out). It participates in one-carbon metabolism; methanogenesis from CO(2); methyl-coenzyme M from 5,10-methylene-5,6,7,8-tetrahydromethanopterin: step 2/2. Functionally, part of a complex that catalyzes the formation of methyl-coenzyme M and tetrahydromethanopterin from coenzyme M and methyl-tetrahydromethanopterin. This is an energy-conserving, sodium-ion translocating step. The sequence is that of Tetrahydromethanopterin S-methyltransferase subunit A from Methanohalophilus mahii (strain ATCC 35705 / DSM 5219 / SLP).